A 182-amino-acid polypeptide reads, in one-letter code: Methyl-CpG-binding domain-containing protein 5 (182 aa).

2 disordered regions span residues M1–D56 and H80–N126. The MBD domain maps to K25 to S101. Over residues E92–G105 the composition is skewed to basic and acidic residues. Over residues S106–K115 the composition is skewed to basic residues.

Homodimer and heterodimer with MBD6. Interacts with DDM1 via its MBD domain. In terms of tissue distribution, mostly expressed in flowers, and, to a lower extent, in seedlings, buds, stems and mature seeds, but barely in roots, exclusively in root meristem cells at tips (at protein level).

Its subcellular location is the nucleus. It is found in the chromosome. In terms of biological role, transcriptional regulator that binds CpG islands in promoters where the DNA is methylated at position 5 of cytosine within CpG dinucleotides. In addition, binds specifically methylated m(5)CpNpN but not m(5)CpNpG (N is A, T or C). Plays probably a role in gene silencing. This is Methyl-CpG-binding domain-containing protein 5 (MBD5) from Arabidopsis thaliana (Mouse-ear cress).